We begin with the raw amino-acid sequence, 670 residues long: Serine/threonine-rich protein adg2 (670 aa).

A signal peptide spans 1–19 (MRRLTISGLLISLAKLCAG). N-linked (GlcNAc...) asparagine glycosylation is found at Asn-77, Asn-159, Asn-204, Asn-224, Asn-274, Asn-297, Asn-327, Asn-351, Asn-370, Asn-381, Asn-405, Asn-424, Asn-435, Asn-459, Asn-478, Asn-489, and Asn-513. The tract at residues 526–651 (GSVSSFSSSP…MSLPPSAGSS (126 aa)) is disordered.

The protein localises to the secreted. Its subcellular location is the endoplasmic reticulum. The polypeptide is Serine/threonine-rich protein adg2 (adg2) (Schizosaccharomyces pombe (strain 972 / ATCC 24843) (Fission yeast)).